The primary structure comprises 177 residues: Large ribosomal subunit protein eL20 (177 aa).

This sequence belongs to the eukaryotic ribosomal protein eL20 family.

This chain is Large ribosomal subunit protein eL20 (RpL18A), found in Drosophila melanogaster (Fruit fly).